The chain runs to 441 residues: ATP-dependent protease ATPase subunit HslU (441 aa).

Residues isoleucine 18, 60 to 65 (GVGKTE), aspartate 254, glutamate 319, and arginine 391 each bind ATP.

This sequence belongs to the ClpX chaperone family. HslU subfamily. As to quaternary structure, a double ring-shaped homohexamer of HslV is capped on each side by a ring-shaped HslU homohexamer. The assembly of the HslU/HslV complex is dependent on binding of ATP.

Its subcellular location is the cytoplasm. Its function is as follows. ATPase subunit of a proteasome-like degradation complex; this subunit has chaperone activity. The binding of ATP and its subsequent hydrolysis by HslU are essential for unfolding of protein substrates subsequently hydrolyzed by HslV. HslU recognizes the N-terminal part of its protein substrates and unfolds these before they are guided to HslV for hydrolysis. The polypeptide is ATP-dependent protease ATPase subunit HslU (Shewanella piezotolerans (strain WP3 / JCM 13877)).